Here is a 46-residue protein sequence, read N- to C-terminus: Crambin (46 aa).

3 cysteine pairs are disulfide-bonded: cysteine 3–cysteine 40, cysteine 4–cysteine 32, and cysteine 16–cysteine 26.

Belongs to the plant thionin (TC 1.C.44) family.

It is found in the secreted. Functionally, the function of this hydrophobic plant seed protein is not known. The sequence is that of Crambin (THI2) from Crambe hispanica subsp. abyssinica (Abyssinian kale).